The following is a 251-amino-acid chain: Alanyl-tRNA editing protein AlaX-M (251 aa).

The Zn(2+) site is built by His-107, His-111, Cys-210, and His-214.

Belongs to the class-II aminoacyl-tRNA synthetase family. Editing domain AlaX-M subfamily. Requires Zn(2+) as cofactor.

It localises to the cytoplasm. Functionally, functions in trans to edit the amino acid moiety from mischarged Ser-tRNA(Ala). Recognition depends, at least in part, on the acceptor stem of tRNA(Ala). This chain is Alanyl-tRNA editing protein AlaX-M (alaXM), found in Methanosarcina mazei (strain ATCC BAA-159 / DSM 3647 / Goe1 / Go1 / JCM 11833 / OCM 88) (Methanosarcina frisia).